The chain runs to 140 residues: Large ribosomal subunit protein uL11 (140 aa).

Belongs to the universal ribosomal protein uL11 family. Part of the ribosomal stalk of the 50S ribosomal subunit. Interacts with L10 and the large rRNA to form the base of the stalk. L10 forms an elongated spine to which L12 dimers bind in a sequential fashion forming a multimeric L10(L12)X complex. Post-translationally, one or more lysine residues are methylated.

Functionally, forms part of the ribosomal stalk which helps the ribosome interact with GTP-bound translation factors. The polypeptide is Large ribosomal subunit protein uL11 (Dehalococcoides mccartyi (strain ATCC BAA-2266 / KCTC 15142 / 195) (Dehalococcoides ethenogenes (strain 195))).